The chain runs to 924 residues: Periplasmic nitrate reductase (924 aa).

Residues Met-1–Ala-29 constitute a signal peptide (tat-type signal). The 4Fe-4S Mo/W bis-MGD-type domain maps to Trp-35–Asp-91. [4Fe-4S] cluster contacts are provided by Cys-42, Cys-45, Cys-49, and Cys-77. Mo-bis(molybdopterin guanine dinucleotide)-binding positions include Lys-79, Gln-147, Asn-172, Cys-176, Trp-209 to Met-216, Met-417, Gln-421, Asn-527, Ser-552 to Asp-553, Lys-575, Asp-602, and Thr-814 to Ser-823. Trp-890 is a binding site for substrate. 2 residues coordinate Mo-bis(molybdopterin guanine dinucleotide): Asn-898 and Lys-915.

The protein belongs to the prokaryotic molybdopterin-containing oxidoreductase family. NasA/NapA/NarB subfamily. As to quaternary structure, component of the periplasmic nitrate reductase NapAB complex composed of NapA and NapB. The cofactor is [4Fe-4S] cluster. Requires Mo-bis(molybdopterin guanine dinucleotide) as cofactor. Predicted to be exported by the Tat system. The position of the signal peptide cleavage has not been experimentally proven.

The protein resides in the periplasm. It catalyses the reaction 2 Fe(II)-[cytochrome] + nitrate + 2 H(+) = 2 Fe(III)-[cytochrome] + nitrite + H2O. Catalytic subunit of the periplasmic nitrate reductase complex NapAB. Receives electrons from NapB and catalyzes the reduction of nitrate to nitrite. This chain is Periplasmic nitrate reductase, found in Campylobacter lari (strain RM2100 / D67 / ATCC BAA-1060).